Reading from the N-terminus, the 242-residue chain is Ribosomal RNA small subunit methyltransferase G (242 aa).

S-adenosyl-L-methionine is bound by residues Gly-79, Phe-84, 130–131, and Arg-150; that span reads AE.

This sequence belongs to the methyltransferase superfamily. RNA methyltransferase RsmG family.

The protein localises to the cytoplasm. Functionally, specifically methylates the N7 position of a guanine in 16S rRNA. This is Ribosomal RNA small subunit methyltransferase G from Levilactobacillus brevis (strain ATCC 367 / BCRC 12310 / CIP 105137 / JCM 1170 / LMG 11437 / NCIMB 947 / NCTC 947) (Lactobacillus brevis).